The chain runs to 201 residues: FMN-dependent NADH:quinone oxidoreductase (201 aa).

Residues Ser-10, 16 to 18, 96 to 99, and 140 to 143 each bind FMN; these read SQS, MYNF, and SRGG.

Belongs to the azoreductase type 1 family. In terms of assembly, homodimer. Requires FMN as cofactor.

It catalyses the reaction 2 a quinone + NADH + H(+) = 2 a 1,4-benzosemiquinone + NAD(+). The catalysed reaction is N,N-dimethyl-1,4-phenylenediamine + anthranilate + 2 NAD(+) = 2-(4-dimethylaminophenyl)diazenylbenzoate + 2 NADH + 2 H(+). Quinone reductase that provides resistance to thiol-specific stress caused by electrophilic quinones. In terms of biological role, also exhibits azoreductase activity. Catalyzes the reductive cleavage of the azo bond in aromatic azo compounds to the corresponding amines. This Pectobacterium atrosepticum (strain SCRI 1043 / ATCC BAA-672) (Erwinia carotovora subsp. atroseptica) protein is FMN-dependent NADH:quinone oxidoreductase.